Reading from the N-terminus, the 225-residue chain is Futalosine hydrolase (225 aa).

It belongs to the PNP/UDP phosphorylase family. Futalosine hydrolase subfamily. As to quaternary structure, homotetramer.

It catalyses the reaction futalosine + H2O = dehypoxanthine futalosine + hypoxanthine. Its pathway is quinol/quinone metabolism; menaquinone biosynthesis. With respect to regulation, no enhancing of inhibitory effects are observed with divalent metal ions. Slightly inhibited by hypoxanthine. Catalyzes the hydrolysis of futalosine (FL) to dehypoxanthine futalosine (DHFL) and hypoxanthine, a step in the biosynthesis of menaquinone (MK, vitamin K2). Is highly specific to futalosine since it does not accept aminodeoxyfutalosine (AFL), or any structurally related nucleotides and nucleosides as substrate. This chain is Futalosine hydrolase, found in Thermus thermophilus (strain ATCC 27634 / DSM 579 / HB8).